A 298-amino-acid chain; its full sequence is uncharacterized protein (298 aa).

Helical transmembrane passes span 5-25 (ILFG…MSAF), 36-56 (MENV…IYPF), 76-96 (VVVG…ISLA), 97-117 (TATA…PLLL), 124-144 (SALI…DPSV), 147-167 (VGLV…LAYI), 181-201 (VILA…FIDI), 216-236 (ILWI…LTYA), 244-264 (IIAP…LYLG), and 272-292 (SSLG…PALL). The EamA 1 domain maps to 17–141 (LCFGIMSAFV…GLVGVVLISD (125 aa)). The EamA 2 domain occupies 183–288 (LAFAFGMSLL…ILCSGLLIAL (106 aa)).

This sequence belongs to the EamA transporter family.

The protein localises to the cell membrane. This is an uncharacterized protein from Helicobacter pylori (strain J99 / ATCC 700824) (Campylobacter pylori J99).